The following is a 346-amino-acid chain: Beta-hexosaminidase (346 aa).

Substrate-binding positions include Asp-62, Arg-70, Arg-134, and 164-165 (KH). The active-site Proton donor/acceptor is the His-177. The active-site Nucleophile is the Asp-249.

It belongs to the glycosyl hydrolase 3 family. NagZ subfamily.

It localises to the cytoplasm. It catalyses the reaction Hydrolysis of terminal non-reducing N-acetyl-D-hexosamine residues in N-acetyl-beta-D-hexosaminides.. The protein operates within cell wall biogenesis; peptidoglycan recycling. Its function is as follows. Plays a role in peptidoglycan recycling by cleaving the terminal beta-1,4-linked N-acetylglucosamine (GlcNAc) from peptide-linked peptidoglycan fragments, giving rise to free GlcNAc, anhydro-N-acetylmuramic acid and anhydro-N-acetylmuramic acid-linked peptides. This Actinobacillus succinogenes (strain ATCC 55618 / DSM 22257 / CCUG 43843 / 130Z) protein is Beta-hexosaminidase.